The sequence spans 607 residues: Guanine nucleotide-binding protein-like 1 (607 aa).

Over residues 1–14 the composition is skewed to basic residues; it reads MPRKKPFSVKQKKK. Residues 1–81 are disordered; the sequence is MPRKKPFSVK…GPRGYDPNRY (81 aa). Positions 15-26 are enriched in basic and acidic residues; sequence QLQDKRERKRGL. Phosphoserine is present on residues serine 32, serine 33, and serine 34. A phosphothreonine mark is found at threonine 48 and threonine 50. Phosphoserine occurs at positions 51 and 68. The CP-type G domain occupies 178–418; that stretch reads WRQLWRVLEM…LCDCPGLIFP (241 aa). 225-228 provides a ligand contact to GTP; the sequence is NKVD. Position 324 is a phosphoserine (serine 324). Residues 367–374 and 411–415 contribute to the GTP site; these read GFPNVGKS and DCPGL. The tract at residues 547 to 607 is disordered; it reads GPAGDEEEEE…PYALLGEDEC (61 aa). Positions 550–584 are enriched in acidic residues; the sequence is GDEEEEEEEELSSSCEEEGEEDRDADEEGEGDEDT. Phosphoserine occurs at positions 561, 562, and 563.

It belongs to the TRAFAC class YlqF/YawG GTPase family.

Possible regulatory or functional link with the histocompatibility cluster. The polypeptide is Guanine nucleotide-binding protein-like 1 (GNL1) (Pongo abelii (Sumatran orangutan)).